We begin with the raw amino-acid sequence, 827 residues long: Xanthomonalisin (827 aa).

The N-terminal stretch at 1–23 (MKIEKTALTVAIALAMSSLSAHA) is a signal peptide. A propeptide spans 24–237 (EDAWVSTHTQ…GPNVGTQAAA (214 aa)) (removed in mature form). The Peptidase S53 domain maps to 241–625 (AHHPQDFAAI…GKLNTYAQAN (385 aa)). Active-site charge relay system residues include glutamate 312, aspartate 316, and serine 544. Residues aspartate 585, valine 586, alanine 601, glycine 603, and aspartate 605 each coordinate Ca(2+). The PKD domain maps to 635 to 722 (TNAPPVANFS…VTVSSSGGTG (88 aa)). Positions 636 to 827 (NAPPVANFSV…GVSLKATWTN (192 aa)) are cleaved as a propeptide — removed in mature form.

The cofactor is Ca(2+). Post-translationally, autocatalytically processed.

The protein localises to the secreted. The enzyme catalyses Cleavage of casein.. With respect to regulation, inhibited by 1,2-epoxy-3-(p-nitrophenoxy)propane (EPNP), but not by pepstatin, pepstatin Ac (S-PI) and diazoacetyl-DL-norleucine methyl ester (DAN). Not inhibited by metal ions. Functionally, pepstatin-insensitive serine-carboxyl proteinase. Shows activity on acid-denatured hemoglobin and on casein. This chain is Xanthomonalisin, found in Xanthomonas sp. (strain T-22).